Consider the following 315-residue polypeptide: Methionyl-tRNA formyltransferase (315 aa).

Serine 113 to proline 116 provides a ligand contact to (6S)-5,6,7,8-tetrahydrofolate.

Belongs to the Fmt family.

The catalysed reaction is L-methionyl-tRNA(fMet) + (6R)-10-formyltetrahydrofolate = N-formyl-L-methionyl-tRNA(fMet) + (6S)-5,6,7,8-tetrahydrofolate + H(+). Its function is as follows. Attaches a formyl group to the free amino group of methionyl-tRNA(fMet). The formyl group appears to play a dual role in the initiator identity of N-formylmethionyl-tRNA by promoting its recognition by IF2 and preventing the misappropriation of this tRNA by the elongation apparatus. The chain is Methionyl-tRNA formyltransferase from Escherichia fergusonii (strain ATCC 35469 / DSM 13698 / CCUG 18766 / IAM 14443 / JCM 21226 / LMG 7866 / NBRC 102419 / NCTC 12128 / CDC 0568-73).